The sequence spans 67 residues: Large ribosomal subunit protein bL35 (67 aa).

This sequence belongs to the bacterial ribosomal protein bL35 family.

The chain is Large ribosomal subunit protein bL35 from Bartonella tribocorum (strain CIP 105476 / IBS 506).